Consider the following 252-residue polypeptide: ATP synthase subunit a (252 aa).

The next 6 membrane-spanning stretches (helical) occupy residues 29–49, 87–107, 116–136, 146–166, 183–205, and 219–239; these read FTNVSFFIIATVVATSVFLFI, FFPLVFSLFTFILVANFIGLF, QIMITFSLAMLVILTVVGYGF, LFVPSGVPVVILPLVTMIEVI, MLAGHITLKVFSGFIVSMIELGI, and VAITALEFLVAFLQAYVFTVL.

It belongs to the ATPase A chain family. In terms of assembly, F-type ATPases have 2 components, CF(1) - the catalytic core - and CF(0) - the membrane proton channel. CF(1) has five subunits: alpha(3), beta(3), gamma(1), delta(1), epsilon(1). CF(0) has three main subunits: a(1), b(2) and c(9-12). The alpha and beta chains form an alternating ring which encloses part of the gamma chain. CF(1) is attached to CF(0) by a central stalk formed by the gamma and epsilon chains, while a peripheral stalk is formed by the delta and b chains.

The protein localises to the cell inner membrane. Its function is as follows. Key component of the proton channel; it plays a direct role in the translocation of protons across the membrane. This Bartonella quintana (strain Toulouse) (Rochalimaea quintana) protein is ATP synthase subunit a.